A 168-amino-acid chain; its full sequence is Sperm acrosome-associated protein 9 (168 aa).

In terms of assembly, microtubule inner protein component of sperm flagellar doublet microtubules. Interacts with CABP1 and CALR. Interacts with INCA1. Interacts with microtubules. Testis-specific. Expressed in round spermatids.

It localises to the cytoplasm. The protein resides in the cytoplasmic vesicle. It is found in the secretory vesicle. The protein localises to the acrosome. Its subcellular location is the cytoskeleton. It localises to the cilium basal body. The protein resides in the flagellum axoneme. It is found in the cilium axoneme. The protein localises to the nucleus. In terms of biological role, microtubule inner protein (MIP) part of the dynein-decorated doublet microtubules (DMTs) of multiciliated respiratory cells and the distal singlet microtubules of monoflagellated spermatozoa. Forms an extensive interaction network cross-linking the lumen of axonemal doublet microtubules. The protein is Sperm acrosome-associated protein 9 (Spaca9) of Rattus norvegicus (Rat).